We begin with the raw amino-acid sequence, 932 residues long: RNA-binding protein 12 (932 aa).

A disordered region spans residues 96–116 (DIPPANASRSGPPPSSGMSSR). Low complexity predominate over residues 98 to 116 (PPANASRSGPPPSSGMSSR). One can recognise an RRM 1 domain in the interval 304 to 379 (LYVSVHGMPF…RYVEVSPATE (76 aa)). A phosphoserine mark is found at Ser-352 and Ser-375. Composition is skewed to polar residues over residues 392–401 (KQNMGPSGQT) and 408–417 (LPRSKSPSGQ). The tract at residues 392-424 (KQNMGPSGQTHPPPQTLPRSKSPSGQKRSRSRS) is disordered. Residues Ser-420, Ser-422, and Ser-424 each carry the phosphoserine modification. The 78-residue stretch at 430–507 (FCVYLKGLPF…RFIQVHPITK (78 aa)) folds into the RRM 2 domain. Ser-525 is modified (phosphoserine). Residues 717 to 734 (NGPPFNFPGNFGGSNAFG) are compositionally biased toward low complexity. The segment at 717 to 853 (NGPPFNFPGN…PGFASSSGKP (137 aa)) is disordered. Gly residues predominate over residues 783 to 811 (SGFGGGPQNFGNGPGSLGGPPGFGSGPPG). Residues 824-836 (AFGPGPGPGPGPG) are compositionally biased toward pro residues. The RRM 3 domain occupies 856–932 (TVIKVQNMPF…GSRKVKLVLG (77 aa)).

The protein localises to the nucleus. The protein is RNA-binding protein 12 (RBM12) of Homo sapiens (Human).